A 379-amino-acid chain; its full sequence is Mating-type protein MAT-1 (379 aa).

Positions 60-117 (RARKALNAFVRFRCYYVAIPMFKQWPMKKLSNLIGLLWEADPNKSLWSLMTKAWSTIR) form a DNA-binding region, alpha box.

Belongs to the MATALPHA1 family.

It localises to the nucleus. Mating type proteins are sequence specific DNA-binding proteins that act as master switches in fungal differentiation by controlling gene expression in a cell type-specific fashion. Transcriptional activator that induces the transcription of alpha-specific genes. The sequence is that of Mating-type protein MAT-1 (MAT1) from Curvularia kusanoi (Cochliobolus kusanoi).